A 412-amino-acid polypeptide reads, in one-letter code: Circumsporozoite protein (412 aa).

A signal peptide spans M1–A18. Residues S69–D328 form a disordered region. Residues N85 to L105 are compositionally biased toward basic and acidic residues. Residues K104 to K111 are required for the binding to heparan sulfate proteoglycans (HSPGs) on the surface of host hepatocytes. Residues K112–P116 are region I; contains the proteolytic cleavage site. The span at N120–N288 shows a compositional bias: low complexity. A run of 41 repeats spans residues P123–N126, P127–D130, P131–N134, P135–D138, P139–N142, P143–D146, P147–N150, P151–N154, P155–N158, P159–N162, P163–N166, P167–N170, P171–N174, P175–N178, P179–N182, P183–N186, P187–N190, P191–N194, P195–N198, P199–N202, P203–N206, P207–D210, P211–N214, P215–N218, P219–N222, P223–N226, P227–N230, P231–N234, P235–N238, P239–N242, P243–N246, P247–N250, P251–N254, P255–N258, P259–N262, P263–N266, P267–N270, P271–N274, P275–N278, P279–N282, and P283–N286. A 41 X 4 AA tandem repeats of P-N-[AV]-[ND] region spans residues P123–N286. Over residues K289–P304 the composition is skewed to polar residues. Positions E310–E324 are enriched in low complexity. Residues K337–S390 enclose the TSP type-1 domain. Cystine bridges form between C349–C384 and C353–C389. T352 carries O-linked (Fuc) threonine glycosylation. Residue C389 is the site of GPI-anchor amidated cysteine attachment. Positions S390–N412 are cleaved as a propeptide — removed in mature form.

It belongs to the plasmodium circumsporozoite protein family. In terms of processing, during host cell invasion, proteolytically cleaved at the cell membrane in the region I by a papain-like cysteine protease of parasite origin. Cleavage is triggered by the sporozoite contact with highly sulfated heparan sulfate proteoglycans (HSPGs) present on the host hepatocyte cell surface. Cleavage exposes the TSP type-1 (TSR) domain and is required for productive invasion of host hepatocytes but not for adhesion to the host cell membrane. Cleavage is dispensable for sporozoite development in the oocyst, motility and for traversal of host and vector cells. O-glycosylated; maybe by POFUT2.

The protein localises to the cell membrane. It localises to the cytoplasm. Essential sporozoite protein. In the mosquito vector, required for sporozoite development in the oocyst, migration through the vector hemolymph and entry into the vector salivary glands. In the vertebrate host, required for sporozoite migration through the host dermis and infection of host hepatocytes. Binds to highly sulfated heparan sulfate proteoglycans (HSPGs) on the surface of host hepatocytes. Functionally, in the vertebrate host, binds to highly sulfated heparan sulfate proteoglycans (HSPGs) on the surface of host hepatocytes and is required for sporozoite invasion of the host hepatocytes. This chain is Circumsporozoite protein, found in Plasmodium falciparum.